Consider the following 76-residue polypeptide: Conotoxin VnMEKL-021 (76 aa).

The signal sequence occupies residues 1-19; it reads MQKLTILLLVAAVLMSTQA. A propeptide spanning residues 20–37 is cleaved from the precursor; sequence LIKGGGEKRPKEKIKFLS. 3 cysteine pairs are disulfide-bonded: cysteine 51-cysteine 65, cysteine 58-cysteine 69, and cysteine 64-cysteine 73.

This sequence belongs to the conotoxin O2 superfamily. As to expression, expressed by the venom duct.

It localises to the secreted. This is Conotoxin VnMEKL-021 from Conus ventricosus (Mediterranean cone).